The following is a 428-amino-acid chain: Trigger factor (428 aa).

In terms of domain architecture, PPIase FKBP-type spans 166 to 250 (GDIVTFDFKG…IKNIKEKILP (85 aa)).

The protein belongs to the FKBP-type PPIase family. Tig subfamily.

It is found in the cytoplasm. The catalysed reaction is [protein]-peptidylproline (omega=180) = [protein]-peptidylproline (omega=0). In terms of biological role, involved in protein export. Acts as a chaperone by maintaining the newly synthesized protein in an open conformation. Functions as a peptidyl-prolyl cis-trans isomerase. The sequence is that of Trigger factor from Mycoplasma capricolum subsp. capricolum (strain California kid / ATCC 27343 / NCTC 10154).